The following is a 307-amino-acid chain: Mitogen-activated protein kinase kinase 7 (307 aa).

Residues 45-303 (VEKLHVLGRG…ASQLLGHPFL (259 aa)) enclose the Protein kinase domain. ATP is bound by residues 51-59 (LGRGSSGIV) and lysine 74. Aspartate 165 (proton acceptor) is an active-site residue. Serine 193 and serine 199 each carry phosphoserine. The residue at position 203 (threonine 203) is a Phosphothreonine.

It belongs to the protein kinase superfamily. STE Ser/Thr protein kinase family. MAP kinase kinase subfamily. As to quaternary structure, interacts with MPK15. Post-translationally, phosphorylation at Ser-193 and Ser-199 by MAP kinase kinase kinases positively regulates kinase activity. Expressed in all tissues, with a relatively higher level in leaves and lower level in roots and flowers.

It catalyses the reaction L-seryl-[protein] + ATP = O-phospho-L-seryl-[protein] + ADP + H(+). The catalysed reaction is L-threonyl-[protein] + ATP = O-phospho-L-threonyl-[protein] + ADP + H(+). It carries out the reaction L-tyrosyl-[protein] + ATP = O-phospho-L-tyrosyl-[protein] + ADP + H(+). Its function is as follows. May function as a negative regulator of polar auxin transport. Positively regulates plant basal and systemic acquired resistance (SAR). Activates MPK3 and MPK6 in vitro. This Arabidopsis thaliana (Mouse-ear cress) protein is Mitogen-activated protein kinase kinase 7 (MKK7).